A 244-amino-acid polypeptide reads, in one-letter code: Carboxy-S-adenosyl-L-methionine synthase (244 aa).

S-adenosyl-L-methionine contacts are provided by residues Y38, 63 to 65 (GCS), 88 to 89 (DN), 116 to 117 (DI), N131, and R198.

The protein belongs to the class I-like SAM-binding methyltransferase superfamily. Cx-SAM synthase family. In terms of assembly, homodimer.

The catalysed reaction is prephenate + S-adenosyl-L-methionine = carboxy-S-adenosyl-L-methionine + 3-phenylpyruvate + H2O. Catalyzes the conversion of S-adenosyl-L-methionine (SAM) to carboxy-S-adenosyl-L-methionine (Cx-SAM). The protein is Carboxy-S-adenosyl-L-methionine synthase of Haemophilus ducreyi (strain 35000HP / ATCC 700724).